Reading from the N-terminus, the 233-residue chain is Large ribosomal subunit protein uL1 (233 aa).

The protein belongs to the universal ribosomal protein uL1 family. As to quaternary structure, part of the 50S ribosomal subunit.

Its function is as follows. Binds directly to 23S rRNA. The L1 stalk is quite mobile in the ribosome, and is involved in E site tRNA release. Functionally, protein L1 is also a translational repressor protein, it controls the translation of the L11 operon by binding to its mRNA. This chain is Large ribosomal subunit protein uL1, found in Shewanella piezotolerans (strain WP3 / JCM 13877).